The sequence spans 370 residues: Putative methylthioribose-1-phosphate isomerase (370 aa).

Substrate-binding positions include 66 to 68 (RGA), arginine 109, and glutamine 217. Aspartate 258 acts as the Proton donor in catalysis. Position 268–269 (268–269 (NK)) interacts with substrate.

It belongs to the eIF-2B alpha/beta/delta subunits family. MtnA subfamily.

The enzyme catalyses 5-(methylsulfanyl)-alpha-D-ribose 1-phosphate = 5-(methylsulfanyl)-D-ribulose 1-phosphate. Functionally, catalyzes the interconversion of methylthioribose-1-phosphate (MTR-1-P) into methylthioribulose-1-phosphate (MTRu-1-P). In Aeropyrum pernix (strain ATCC 700893 / DSM 11879 / JCM 9820 / NBRC 100138 / K1), this protein is Putative methylthioribose-1-phosphate isomerase.